Reading from the N-terminus, the 585-residue chain is Rab GTPase-binding effector protein 2 (585 aa).

Residue Ala-2 is modified to N-acetylalanine. Positions 27-183 form a coiled coil; sequence QEGAKVEAES…ELIQEIQRRP (157 aa). Disordered stretches follow at residues 178–265, 381–408, and 491–515; these read EIQR…ASLV, ENQG…EESL, and EEQS…EEAQ. A phosphoserine mark is found at Ser-188, Ser-192, Ser-198, and Ser-202. The stretch at 288–540 forms a coiled coil; the sequence is NQWEQLQLEG…QAELETSEQV (253 aa). Over residues 491–501 the composition is skewed to basic and acidic residues; it reads EEQSKAKRQEV.

This sequence belongs to the rabaptin family. As to quaternary structure, heterodimer with RABGEF1. The dimer binds RAB5A that has been activated by GTP-binding. Interacts with SDCCAG8; this interaction is important for ciliogenesis regulation. Interacts with RAB4; this interaction may mediate VEGFR2 cell surface expression.

The protein resides in the cytoplasm. Its subcellular location is the early endosome. The protein localises to the cytoskeleton. It localises to the microtubule organizing center. It is found in the centrosome. The protein resides in the cilium basal body. Functionally, plays a role in membrane trafficking and in homotypic early endosome fusion. Participates in arteriogenesis by regulating vascular endothelial growth factor receptor 2/VEGFR2 cell surface expression and endosomal trafficking. By interacting with SDCCAG8, localizes to centrosomes and plays a critical role in ciliogenesis. This chain is Rab GTPase-binding effector protein 2 (RABEP2), found in Bos taurus (Bovine).